The sequence spans 524 residues: Light-independent protochlorophyllide reductase subunit B (524 aa).

Aspartate 36 serves as a coordination point for [4Fe-4S] cluster. Residue aspartate 290 is the Proton donor of the active site. Residue 425–426 (GL) coordinates substrate.

Belongs to the ChlB/BchB/BchZ family. Protochlorophyllide reductase is composed of three subunits; ChlL, ChlN and ChlB. Forms a heterotetramer of two ChlB and two ChlN subunits. It depends on [4Fe-4S] cluster as a cofactor.

It catalyses the reaction chlorophyllide a + oxidized 2[4Fe-4S]-[ferredoxin] + 2 ADP + 2 phosphate = protochlorophyllide a + reduced 2[4Fe-4S]-[ferredoxin] + 2 ATP + 2 H2O. The protein operates within porphyrin-containing compound metabolism; chlorophyll biosynthesis (light-independent). In terms of biological role, component of the dark-operative protochlorophyllide reductase (DPOR) that uses Mg-ATP and reduced ferredoxin to reduce ring D of protochlorophyllide (Pchlide) to form chlorophyllide a (Chlide). This reaction is light-independent. The NB-protein (ChlN-ChlB) is the catalytic component of the complex. The protein is Light-independent protochlorophyllide reductase subunit B of Synechococcus sp. (strain CC9605).